Reading from the N-terminus, the 419-residue chain is UPF0229 protein Tbd_1233 (419 aa).

The interval 85–108 is disordered; sequence GDRIDRPAGEGGGGSGGSPDGEGM. A compositionally biased stretch (gly residues) spans 93 to 104; it reads GEGGGGSGGSPD.

Belongs to the UPF0229 family.

The sequence is that of UPF0229 protein Tbd_1233 from Thiobacillus denitrificans (strain ATCC 25259 / T1).